A 248-amino-acid chain; its full sequence is Ureidoacrylate amidohydrolase RutB (248 aa).

The active-site Proton acceptor is the D41. K150 is a catalytic residue. C183 functions as the Nucleophile in the catalytic mechanism.

This sequence belongs to the isochorismatase family. RutB subfamily.

The catalysed reaction is (Z)-3-ureidoacrylate + H2O + H(+) = (Z)-3-aminoacrylate + NH4(+) + CO2. It catalyses the reaction (Z)-3-ureidoacrylate + H2O = (Z)-3-aminoacrylate + carbamate + H(+). It carries out the reaction (Z)-2-methylureidoacrylate + H2O + H(+) = (Z)-2-methylaminoacrylate + NH4(+) + CO2. Its function is as follows. Hydrolyzes ureidoacrylate to form aminoacrylate and carbamate. The carbamate hydrolyzes spontaneously, thereby releasing one of the nitrogen atoms of the pyrimidine ring as ammonia and one of its carbon atoms as CO2. The polypeptide is Ureidoacrylate amidohydrolase RutB (Methylorubrum extorquens (strain CM4 / NCIMB 13688) (Methylobacterium extorquens)).